Reading from the N-terminus, the 218-residue chain is Probable transaldolase (218 aa).

The Schiff-base intermediate with substrate role is filled by Lys-83.

Belongs to the transaldolase family. Type 3B subfamily.

The protein resides in the cytoplasm. The enzyme catalyses D-sedoheptulose 7-phosphate + D-glyceraldehyde 3-phosphate = D-erythrose 4-phosphate + beta-D-fructose 6-phosphate. The protein operates within carbohydrate degradation; pentose phosphate pathway; D-glyceraldehyde 3-phosphate and beta-D-fructose 6-phosphate from D-ribose 5-phosphate and D-xylulose 5-phosphate (non-oxidative stage): step 2/3. Its function is as follows. Transaldolase is important for the balance of metabolites in the pentose-phosphate pathway. This is Probable transaldolase (tal) from Mesorhizobium japonicum (strain LMG 29417 / CECT 9101 / MAFF 303099) (Mesorhizobium loti (strain MAFF 303099)).